The primary structure comprises 455 residues: Single-stranded DNA-binding protein homolog sam-10 (455 aa).

Residues alanine 19–asparagine 51 form the LisH domain. Disordered stretches follow at residues proline 217–proline 249, serine 281–glycine 302, glycine 314–lysine 343, and glutamate 357–isoleucine 442. Composition is skewed to low complexity over residues alanine 288 to threonine 298 and valine 321 to glycine 336. Polar residues predominate over residues histidine 396 to threonine 406. A compositionally biased stretch (low complexity) spans proline 407–leucine 421.

In terms of tissue distribution, ubiquitously expressed with higher expression in the head and tail ganglia, the vulva and PLM neurons.

Its subcellular location is the cytoplasm. It is found in the nucleus. Its function is as follows. Involved cell autonomously in PLM neuron pre-synaptic differentiation by negatively regulating prk-2 expression and in neurite branch positioning. The chain is Single-stranded DNA-binding protein homolog sam-10 from Caenorhabditis elegans.